Here is a 154-residue protein sequence, read N- to C-terminus: Ribosome maturation factor RimP (154 aa).

The protein belongs to the RimP family.

Its subcellular location is the cytoplasm. Its function is as follows. Required for maturation of 30S ribosomal subunits. This chain is Ribosome maturation factor RimP, found in Finegoldia magna (strain ATCC 29328 / DSM 20472 / WAL 2508) (Peptostreptococcus magnus).